Consider the following 272-residue polypeptide: 3-methyl-2-oxobutanoate hydroxymethyltransferase (272 aa).

The Mg(2+) site is built by Asp54 and Asp93. Residues 54-55, Asp93, and Lys123 contribute to the 3-methyl-2-oxobutanoate site; that span reads DS. Glu125 contacts Mg(2+). Glu190 serves as the catalytic Proton acceptor.

Belongs to the PanB family. As to quaternary structure, homodecamer; pentamer of dimers. Requires Mg(2+) as cofactor.

It is found in the cytoplasm. The catalysed reaction is 3-methyl-2-oxobutanoate + (6R)-5,10-methylene-5,6,7,8-tetrahydrofolate + H2O = 2-dehydropantoate + (6S)-5,6,7,8-tetrahydrofolate. The protein operates within cofactor biosynthesis; (R)-pantothenate biosynthesis; (R)-pantoate from 3-methyl-2-oxobutanoate: step 1/2. In terms of biological role, catalyzes the reversible reaction in which hydroxymethyl group from 5,10-methylenetetrahydrofolate is transferred onto alpha-ketoisovalerate to form ketopantoate. The protein is 3-methyl-2-oxobutanoate hydroxymethyltransferase of Tropheryma whipplei (strain Twist) (Whipple's bacillus).